The following is a 472-amino-acid chain: Acetyl-CoA decarbonylase/synthase complex subunit beta 2 (472 aa).

The [Ni-Fe-S] cluster site is built by cysteine 189, cysteine 192, cysteine 278, and cysteine 280.

This sequence belongs to the CdhC family. In terms of assembly, monomer. The ACDS complex is made up of alpha, epsilon, beta, gamma and delta chains with a probable stoichiometry of (alpha(2)epsilon(2))(4)-beta(8)-(gamma(1)delta(1))(8) (Potential). It depends on [Ni-Fe-S] cluster as a cofactor.

It carries out the reaction Co(I)-[corrinoid Fe-S protein] + acetyl-CoA + H(+) = methyl-Co(III)-[corrinoid Fe-S protein] + CO + CoA. It participates in one-carbon metabolism; methanogenesis from acetate. Part of a complex that catalyzes the reversible cleavage of acetyl-CoA, allowing growth on acetate as sole source of carbon and energy. The alpha-epsilon complex generates CO from CO(2), while the beta subunit (this protein) combines the CO with CoA and a methyl group to form acetyl-CoA. The methyl group, which is incorporated into acetyl-CoA, is transferred to the beta subunit by a corrinoid iron-sulfur protein (the gamma-delta complex). In Methanosarcina thermophila, this protein is Acetyl-CoA decarbonylase/synthase complex subunit beta 2 (cdhC2).